The chain runs to 323 residues: Large ribosomal subunit protein uL10 (323 aa).

Residues 298-323 form a disordered region; that stretch reads AAAAPAAAAEPEEEDDDDDFGMGALF. Acidic residues predominate over residues 307-317; that stretch reads EPEEEDDDDDF.

It belongs to the universal ribosomal protein uL10 family. In terms of assembly, P0 forms a pentameric complex by interaction with dimers of P1 and P2. In terms of processing, phosphorylated.

Functionally, ribosomal protein P0 is the functional equivalent of E.coli protein L10. The protein is Large ribosomal subunit protein uL10 of Trypanosoma cruzi.